A 465-amino-acid chain; its full sequence is Ribosomal oxygenase 2 (465 aa).

The region spanning 139–271 is the JmjC domain; it reads QPQRYKDELW…NSWGDCLLDS (133 aa). Histidine 179, aspartate 181, and histidine 240 together coordinate Fe cation. Phosphoserine is present on serine 309.

Belongs to the ROX family. MINA53 subfamily. It depends on Fe(2+) as a cofactor. As to expression, predominantly expressed in testis. Expressed at high levels in spleen, thymus, and colon, but barely detectable in brain, skeletal muscle, and seminal vesicle (at protein level).

Its subcellular location is the nucleus. It is found in the nucleolus. It catalyses the reaction L-histidyl-[ribosomal protein uL15] + 2-oxoglutarate + O2 = (3S)-3-hydroxy-L-histidyl-[ribosomal protein uL15] + succinate + CO2. It carries out the reaction L-histidyl-[protein] + 2-oxoglutarate + O2 = (3S)-3-hydroxy-L-histidyl-[protein] + succinate + CO2. Oxygenase that can act as both a histone lysine demethylase and a ribosomal histidine hydroxylase. Is involved in the demethylation of trimethylated 'Lys-9' on histone H3 (H3K9me3), leading to an increase in ribosomal RNA expression. Also catalyzes the hydroxylation of 60S ribosomal protein L27a on 'His-39'. May play an important role in cell growth and survival. May be involved in ribosome biogenesis, most likely during the assembly process of pre-ribosomal particles. In Mus musculus (Mouse), this protein is Ribosomal oxygenase 2.